A 519-amino-acid polypeptide reads, in one-letter code: Membrane-bound glycerophospholipid O-acyltransferase 2 (519 aa).

6 consecutive transmembrane segments (helical) span residues P22–F42, T61–V81, C88–G108, F184–G204, L236–E256, and Y288–F305. Catalysis depends on residues N341 and H372. A run of 3 helical transmembrane segments spans residues F365–G385, I415–L435, and F443–P463.

It belongs to the membrane-bound acyltransferase family.

The protein localises to the endoplasmic reticulum membrane. It catalyses the reaction a 1-acyl-sn-glycero-3-phosphocholine + an acyl-CoA = a 1,2-diacyl-sn-glycero-3-phosphocholine + CoA. The enzyme catalyses a 1-acyl-sn-glycero-3-phosphoethanolamine + an acyl-CoA = a 1,2-diacyl-sn-glycero-3-phosphoethanolamine + CoA. The catalysed reaction is a 1-acyl-sn-glycero-3-phosphate + an acyl-CoA = a 1,2-diacyl-sn-glycero-3-phosphate + CoA. It carries out the reaction (9Z)-hexadecenoyl-CoA + 1-hexadecanoyl-sn-glycero-3-phosphocholine = 1-hexadecanoyl-2-(9Z-hexadecenoyl)-sn-glycero-3-phosphocholine + CoA. It catalyses the reaction 1-hexadecanoyl-sn-glycero-3-phosphoethanolamine + (9Z)-octadecenoyl-CoA = 1-hexadecanoyl-2-(9Z-octadecenoyl)-sn-glycero-3-phosphoethanolamine + CoA. The enzyme catalyses 1-hexadecanoyl-sn-glycero-3-phosphoethanolamine + (9Z)-hexadecenoyl-CoA = 1-hexadecanoyl-2-(9Z)-hexadecenoyl-sn-glycero-3-phosphoethanolamine + CoA. The catalysed reaction is 1-(9Z-octadecenoyl)-sn-glycero-3-phospho-L-serine + hexadecanoyl-CoA = 1-(9Z)-octadecenoyl-2-hexadecanoyl-sn-glycero-3-phosphoserine + CoA. It carries out the reaction (9Z,12Z)-octadecadienoyl-CoA + 1-hexadecanoyl-sn-glycero-3-phosphocholine = 1-hexadecanoyl-2-(9Z,12Z-octadecadienoyl)-sn-glycero-3-phosphocholine + CoA. It catalyses the reaction 1-hexadecanoyl-sn-glycero-3-phosphocholine + (9Z)-octadecenoyl-CoA = 1-hexadecanoyl-2-(9Z-octadecenoyl)-sn-glycero-3-phosphocholine + CoA. The enzyme catalyses 1-hexadecanoyl-sn-glycero-3-phosphate + (9Z)-hexadecenoyl-CoA = 1-hexadecanoyl-2-[(9Z)-hexadec-9-enoyl]-sn-glycero-3-phosphate + CoA. The catalysed reaction is 1-hexadecanoyl-sn-glycero-3-phosphate + (9Z)-octadecenoyl-CoA = 1-hexadecanoyl-2-(9Z-octadecenoyl)-sn-glycero-3-phosphate + CoA. It carries out the reaction a 1-O-(1Z-alkenyl)-sn-glycero-3-phosphocholine + (9Z)-octadecenoyl-CoA = 1-O-(1Z)-alkenyl-2-(9Z)-octadecenoyl-sn-glycero-3-phosphocholine + CoA. It catalyses the reaction a 1-O-(1Z-alkenyl)-sn-glycero-3-phosphoethanolamine + (9Z)-octadecenoyl-CoA = 1-O-(1Z)-alkenyl-2-(9Z)-octadecenoyl-sn-glycero-3-phosphoethanolamine + CoA. The enzyme catalyses 1-octadecanoyl-sn-glycero-3-phosphoethanolamine + (9Z)-octadecenoyl-CoA = 1-octadecanoyl-2-(9Z-octadecenoyl)-sn-glycero-3-phosphoethanolamine + CoA. The catalysed reaction is 1-octadecanoyl-sn-glycero-3-phosphocholine + (9Z)-octadecenoyl-CoA = 1-octadecanoyl-2-(9Z-octadecenoyl)-sn-glycero-3-phosphocholine + CoA. It carries out the reaction 1-(9Z-octadecenoyl)-sn-glycero-3-phosphoethanolamine + (9Z)-octadecenoyl-CoA = 1,2-di-(9Z-octadecenoyl)-sn-glycero-3-phosphoethanolamine + CoA. It functions in the pathway lipid metabolism; phospholipid metabolism. Its activity is regulated as follows. Partially inhibited by thimerosal. Functionally, acyltransferase which catalyzes the transfer of an acyl group from an acyl-CoA to a lysophospholipid leading to the production of a phospholipid and participates in the reacylation step of the phospholipid remodeling pathway also known as the Lands cycle. May catalyze preferentially the acylation of lysophosphatidylethanolamine (1-acyl-sn-glycero-3-phosphoethanolamine or LPE) and lysophosphatidic acid (LPA) and to a lesser extend lysophosphatidylcholine (LPC) and lysophosphatidylserine (LPS). Prefers oleoyl-CoA as the acyl donor. May be involved in chondrocyte differentiation. This chain is Membrane-bound glycerophospholipid O-acyltransferase 2, found in Rattus norvegicus (Rat).